The chain runs to 418 residues: Putative F-box protein At3g23950 (418 aa).

The region spanning 1-42 (MNIPPELTFEVLVRLPLKSLARFRSMCKEWKLVIDSEFFRDC) is the F-box domain.

This Arabidopsis thaliana (Mouse-ear cress) protein is Putative F-box protein At3g23950.